The primary structure comprises 467 residues: Methylenetetrahydrofolate--tRNA-(uracil-5-)-methyltransferase TrmFO (467 aa).

Residue 11–16 (GAGLAG) coordinates FAD.

This sequence belongs to the MnmG family. TrmFO subfamily. FAD serves as cofactor.

It localises to the cytoplasm. The catalysed reaction is uridine(54) in tRNA + (6R)-5,10-methylene-5,6,7,8-tetrahydrofolate + NADH + H(+) = 5-methyluridine(54) in tRNA + (6S)-5,6,7,8-tetrahydrofolate + NAD(+). The enzyme catalyses uridine(54) in tRNA + (6R)-5,10-methylene-5,6,7,8-tetrahydrofolate + NADPH + H(+) = 5-methyluridine(54) in tRNA + (6S)-5,6,7,8-tetrahydrofolate + NADP(+). In terms of biological role, catalyzes the folate-dependent formation of 5-methyl-uridine at position 54 (M-5-U54) in all tRNAs. This chain is Methylenetetrahydrofolate--tRNA-(uracil-5-)-methyltransferase TrmFO, found in Prochlorococcus marinus (strain NATL1A).